The chain runs to 524 residues: Rho guanine nucleotide exchange factor 3 (524 aa).

Ser46 and Ser69 each carry phosphoserine. A DH domain is found at 121–303; sequence KRQEAIFELS…QGIVAEINTK (183 aa). One can recognise a PH domain in the interval 290 to 448; that stretch reads INIIQGIVAE…WLNCIRQAKE (159 aa). Positions 461 to 524 are disordered; it reads DSEGLVQGPG…CANSRPEESV (64 aa). Residues 472-484 are compositionally biased toward basic and acidic residues; sequence ENREPQGETKLEQ.

In terms of assembly, interacts with RHOA and RHOB.

It is found in the cytoplasm. In terms of biological role, acts as a guanine nucleotide exchange factor (GEF) for RhoA and RhoB GTPases. The polypeptide is Rho guanine nucleotide exchange factor 3 (Arhgef3) (Mus musculus (Mouse)).